Here is a 420-residue protein sequence, read N- to C-terminus: Pyrin and HIN domain-containing protein 1 (420 aa).

The 87-residue stretch at 1–87 folds into the Pyrin domain; it reads MVNEYKRIVL…ANKLKNEKAK (87 aa). Disordered stretches follow at residues 82-201 and 216-236; these read KNEK…SSSA and RLKN…GSKK. A compositionally biased stretch (basic residues) spans 87 to 102; the sequence is KAKRTRTGKRKTAAKR. 2 stretches are compositionally biased toward polar residues: residues 108–118 and 126–151; these read PSTSQPMSTTN and GRST…AIQI. Low complexity predominate over residues 152 to 169; sequence SPTIASSSGQTSSRSSET. A compositionally biased stretch (polar residues) spans 170–201; the sequence is LQSIIQSPKTPKRPSSSILDPPVSSGTASSSA. In terms of domain architecture, HIN-200 spans 219-416; that stretch reads NVPKEPSEEN…STTHSNMQVI (198 aa). Residues 220 to 229 are compositionally biased toward basic and acidic residues; that stretch reads VPKEPSEENG.

This sequence belongs to the HIN-200 family.

The protein localises to the nucleus. The chain is Pyrin and HIN domain-containing protein 1 from Mus musculus (Mouse).